A 338-amino-acid polypeptide reads, in one-letter code: S-adenosylmethionine:tRNA ribosyltransferase-isomerase (338 aa).

Belongs to the QueA family. In terms of assembly, monomer.

It localises to the cytoplasm. The enzyme catalyses 7-aminomethyl-7-carbaguanosine(34) in tRNA + S-adenosyl-L-methionine = epoxyqueuosine(34) in tRNA + adenine + L-methionine + 2 H(+). It functions in the pathway tRNA modification; tRNA-queuosine biosynthesis. Transfers and isomerizes the ribose moiety from AdoMet to the 7-aminomethyl group of 7-deazaguanine (preQ1-tRNA) to give epoxyqueuosine (oQ-tRNA). This chain is S-adenosylmethionine:tRNA ribosyltransferase-isomerase, found in Francisella tularensis subsp. tularensis (strain WY96-3418).